The primary structure comprises 513 residues: MRKKCSVCLWILVLLLSCLSGKSAYAATSTTIAKHIGNSNPLIDHHLGADPVALTYNGRVYIYMSSDDYEYNSNGTIKDNSFANLNRVFVISSADMVNWTDHGAIPVAGANGANGGRGIAKWAGASWAPSIAVKKINGKDKFFLYFANSGGGIGVLTADSPIGPWTDPIGKPLVTPSTPGMSGVVWLFDPAVFVDDDGTGYLYAGGGVPGVSNPTQGQWANPKTARVIKLGPDMTSVVGSASTIDAPFMFEDSGLHKYNGTYYYSYCINFGGTHPADKPPGEIGYMTSSSPMGPFTYRGHFLKNPGAFFGGGGNNHHAVFNFKNEWYVVYHAQTVSSALFGAGKGYRSPHINKLVHNADGSIQEVAANYAGVTQISNLNPYNRVEAETFAWNGRILTEKSTAPGGPVNNQHVTSIQNGDWIAVGNADFGAGGARSFKANVASTLGGKIEVRLDSADGKLVGTLNVPSTGGAQTWREIETAVSGATGVHKVFFVFTGTGTGNLFNFDYWQFTQR.

Residues 1–26 (MRKKCSVCLWILVLLLSCLSGKSAYA) form the signal peptide. D50 serves as the catalytic Proton acceptor. The active-site Proton donor is the E251. Position 314 (N314) interacts with substrate. In terms of domain architecture, CBM6 spans 382 to 511 (NRVEAETFAW…LFNFDYWQFT (130 aa)). Ca(2+) is bound by residues E385, E387, N409, Q410, and D506.

It localises to the secreted. It catalyses the reaction Hydrolysis of terminal non-reducing alpha-L-arabinofuranoside residues in alpha-L-arabinosides.. The protein operates within glycan degradation; xylan degradation. Cleaves arabinose units from O-2- or O-3-monosubstituted xylose residues, thereby assisting in arabinoxylan (AX) and short-chain arabinoxylo-oligosaccharide (AXOS) degradation. Is more active on wheat bran AXOS than on wheat water-extractable AX and rye water-extractable AX. Does not display endoxylanase, xylosidase or arabinanase activity. The polypeptide is Arabinoxylan arabinofuranohydrolase (xynD) (Bacillus subtilis (strain 168)).